The following is a 361-amino-acid chain: Phospho-N-acetylmuramoyl-pentapeptide-transferase (361 aa).

A run of 10 helical transmembrane segments spans residues 25 to 45 (RTVLAALTALIISFIVGPAMI), 73 to 93 (TMGGALILVSIAITTLLWADL), 97 to 117 (YVWIVLITTLGFGMIGWVDDY), 134 to 154 (LFWQSAIAILVALYLVLTAEL), 168 to 188 (VAVPLGVTGFVALTYFVIVGT), 200 to 220 (GLAIMPTVMISSALAIFSYVA), 237 to 257 (AGELAVFCGALAGAGLAFLWF), 264 to 284 (VFMGDVGALALGAALGIVTVI), 289 to 309 (IVMLIMGGVFVVETLSVMLQV), and 338 to 358 (QVVVRFWIITMMLVLFGLSSL).

The protein belongs to the glycosyltransferase 4 family. MraY subfamily. Mg(2+) serves as cofactor.

The protein localises to the cell inner membrane. The enzyme catalyses UDP-N-acetyl-alpha-D-muramoyl-L-alanyl-gamma-D-glutamyl-meso-2,6-diaminopimeloyl-D-alanyl-D-alanine + di-trans,octa-cis-undecaprenyl phosphate = di-trans,octa-cis-undecaprenyl diphospho-N-acetyl-alpha-D-muramoyl-L-alanyl-D-glutamyl-meso-2,6-diaminopimeloyl-D-alanyl-D-alanine + UMP. It participates in cell wall biogenesis; peptidoglycan biosynthesis. In terms of biological role, catalyzes the initial step of the lipid cycle reactions in the biosynthesis of the cell wall peptidoglycan: transfers peptidoglycan precursor phospho-MurNAc-pentapeptide from UDP-MurNAc-pentapeptide onto the lipid carrier undecaprenyl phosphate, yielding undecaprenyl-pyrophosphoryl-MurNAc-pentapeptide, known as lipid I. The chain is Phospho-N-acetylmuramoyl-pentapeptide-transferase from Nitrosospira multiformis (strain ATCC 25196 / NCIMB 11849 / C 71).